Consider the following 451-residue polypeptide: Phosphoglucosamine mutase (451 aa).

S102 acts as the Phosphoserine intermediate in catalysis. Mg(2+)-binding residues include S102, D243, D245, and D247. The residue at position 102 (S102) is a Phosphoserine.

Belongs to the phosphohexose mutase family. It depends on Mg(2+) as a cofactor. Activated by phosphorylation.

It catalyses the reaction alpha-D-glucosamine 1-phosphate = D-glucosamine 6-phosphate. In terms of biological role, catalyzes the conversion of glucosamine-6-phosphate to glucosamine-1-phosphate. In Brucella canis (strain ATCC 23365 / NCTC 10854 / RM-666), this protein is Phosphoglucosamine mutase.